We begin with the raw amino-acid sequence, 1157 residues long: DNA-directed RNA polymerase subunit beta (1157 aa).

It belongs to the RNA polymerase beta chain family. In terms of assembly, the RNAP catalytic core consists of 2 alpha, 1 beta, 1 beta' and 1 omega subunit. When a sigma factor is associated with the core the holoenzyme is formed, which can initiate transcription.

The catalysed reaction is RNA(n) + a ribonucleoside 5'-triphosphate = RNA(n+1) + diphosphate. Functionally, DNA-dependent RNA polymerase catalyzes the transcription of DNA into RNA using the four ribonucleoside triphosphates as substrates. The chain is DNA-directed RNA polymerase subunit beta from Tropheryma whipplei (strain Twist) (Whipple's bacillus).